The primary structure comprises 388 residues: MGGPRFKDKVFLKCAICQESAEGFHFGAEACRACAAFFRRTVSNRKTYSCQGNNDCDVTINIRCMCRACRYIKCIEVGMNPAGVQQRLPPSKTLVEVSMDLPTVSNPSILSFPSPPSSLMLHIPSSYSNQMPILDKMRKSYETLCNARKTLHRKDGANIFQDNVPKPVTYKKAIDQGMKDVKLTSDWVSWCFEDFKNLSIDQKKILFHNAYTPYFMMEGGFLSHIRNTPEHLVMPSGDYIDTLDLNSFYNCSESDRQISSKEIDRLFKPSNDRFIKSVTLPMMSLQLDIFEFFVLFTLLLWDTGLIEISEECIEIGTKVKTQVLKELDFYMRNVKKVEEPLVRTANIVNLLPAVQKGVRRIQDDLEVTKVFDLYTASDEFYNLMSGRF.

A DNA-binding region (nuclear receptor) is located at residues 11-86; the sequence is FLKCAICQES…VGMNPAGVQQ (76 aa). 2 NR C4-type zinc fingers span residues 14 to 34 and 50 to 74; these read CAICQESAEGFHFGAEACRAC and CQGNNDCDVTINIRCMCRACRYIKC. The NR LBD domain occupies 115–387; sequence PPSSLMLHIP…DEFYNLMSGR (273 aa).

It belongs to the nuclear hormone receptor family.

The protein resides in the nucleus. Its function is as follows. Orphan nuclear receptor. This Caenorhabditis elegans protein is Nuclear hormone receptor family member nhr-16 (nhr-16).